The following is a 495-amino-acid chain: Potassium voltage-gated channel subfamily A member 1 (495 aa).

The interval 1-30 (MTVMSGENADEASAAPGHPQDGSYPRQADH) is disordered. Positions 1-128 (MTVMSGENAD…FYELGEEAME (128 aa)) are tetramerization domain. Residues 1–164 (MTVMSGENAD…LLFEYPESSG (164 aa)) are Cytoplasmic-facing. S23 is subject to Phosphoserine. A helical transmembrane segment spans residues 165–186 (PARVIAIVSVMVILISIVIFCL). Over 187–220 (ETLPELKDDKDFTGTIHRIDNTTVIYTSNIFTDP) the chain is Extracellular. The N-linked (GlcNAc...) asparagine glycan is linked to N207. A helical membrane pass occupies residues 221 to 242 (FFIVETLCIIWFSFELVVRFFA). C243 is lipidated: S-palmitoyl cysteine. The Cytoplasmic segment spans residues 243–253 (CPSKTDFFKNI). A helical transmembrane segment spans residues 254–274 (MNFIDIVAIIPYFITLGTEIA). Residues 275 to 287 (EQEGNQKGEQATS) are Extracellular-facing. The chain crosses the membrane as a helical; Voltage-sensor span at residues 288-308 (LAILRVIRLVRVFRIFKLSRH). Residues 309 to 323 (SKGLQILGQTLKASM) are Cytoplasmic-facing. An S4-S5 linker region spans residues 310–323 (KGLQILGQTLKASM). S322 is modified (phosphoserine; by PKA). A helical transmembrane segment spans residues 324 to 345 (RELGLLIFFLFIGVILFSSAVY). At 346-359 (FAEAEEAESHFSSI) the chain is on the extracellular side. The segment at residues 360 to 371 (PDAFWWAVVSMT) is an intramembrane region (helical). The Selectivity filter signature appears at 372–377 (TVGYGD). Residues 372–379 (TVGYGDMY) lie within the membrane without spanning it. The Extracellular portion of the chain corresponds to 380 to 386 (PVTIGGK). A helical transmembrane segment spans residues 387–415 (IVGSLCAIAGVLTIALPVPVIVSNFNYFY). Residues 416–495 (HRETEGEEQA…VNKSKLLTDV (80 aa)) are Cytoplasmic-facing. A phosphoserine mark is found at S437 and S439. The residue at position 446 (S446) is a Phosphoserine; by PKA. Positions 493–495 (TDV) match the PDZ-binding motif.

Belongs to the potassium channel family. A (Shaker) (TC 1.A.1.2) subfamily. Kv1.1/KCNA1 sub-subfamily. In terms of assembly, homotetramer and heterotetramer with other channel-forming alpha subunits, such as KCNA2, KCNA4, KCNA5, KCNA6 and KCNA7. Channel activity is regulated by interaction with the beta subunits KCNAB1 and KCNAB2. Identified in a complex with KCNA2 and KCNAB2. Interacts (via C-terminus) with the PDZ domains of DLG1, DLG2 and DLG4. Interacts with LGI1 within a complex containing LGI1, KCNA4 and KCNAB1. Interacts (via cytoplasmic N-terminal domain) with KCNRG; this inhibits channel activity. Interacts with ANK3; this inhibits channel activity. Interacts (via N-terminus) with STX1A; this promotes channel inactivation. Interacts (via N-terminus) with the heterodimer formed by GNB1 and GNG2; this promotes channel inactivation. Can interact simultaneously with STX1A and the heterodimer formed by GNB1 and GNG2. Interacts with ADAM11. Palmitoylated on Cys-243; which may be required for membrane targeting. Post-translationally, N-glycosylated. In terms of processing, phosphorylated on tyrosine residues. Phosphorylation increases in response to NRG1; this inhibits channel activity. Phosphorylated by PKA. Phosphorylation at Ser-446 regulates channel activity by down-regulating expression at the cell membrane. Detected in hippocampus, in the middle third of the molecular layer of the dentate gyrus and in stratum radiatum and stratum oriens. Detected in the mossy fiber zone in the hippocampus CA3 region, at or near axon terminals. Detected in brain cortex, at basket cell terminals. Detected adjacent to nodes of Ranvier in juxtaparanodal zones in spinal cord nerve fibers, but also in paranodal regions in some myelinated spinal cord axons. Detected in juxtaparanodal regions adjacent to the nodes of Ranvier in myelinated axons in cerebellar white matter. Detected in sensory neurons. Detected in neurons from the medial nucleus of the trapezoid body. Detected in basolateral amygdala. Detected in the paraventricular nucleus of the hypothalamus. Detected in the islet of Langerhans (at protein level).

It is found in the cell membrane. Its subcellular location is the membrane. It localises to the cell projection. The protein localises to the axon. The protein resides in the cytoplasmic vesicle. It is found in the perikaryon. Its subcellular location is the endoplasmic reticulum. It localises to the dendrite. The protein localises to the cell junction. The protein resides in the synapse. It is found in the presynapse. Its subcellular location is the presynaptic cell membrane. It catalyses the reaction K(+)(in) = K(+)(out). Its activity is regulated as follows. Inhibited by 4-aminopyridine (4-AP) and by tetraethylammonium (TEA). Inhibited by kaliotoxin (KTX). In terms of biological role, voltage-gated potassium channel that mediates transmembrane potassium transport in excitable membranes, primarily in the brain and the central nervous system, but also in the kidney. Contributes to the regulation of the membrane potential and nerve signaling, and prevents neuronal hyperexcitability. Forms tetrameric potassium-selective channels through which potassium ions pass in accordance with their electrochemical gradient. The channel alternates between opened and closed conformations in response to the voltage difference across the membrane. Can form functional homotetrameric channels and heterotetrameric channels that contain variable proportions of KCNA1, KCNA2, KCNA4, KCNA5, KCNA6, KCNA7, and possibly other family members as well; channel properties depend on the type of alpha subunits that are part of the channel. Channel properties are modulated by cytoplasmic beta subunits that regulate the subcellular location of the alpha subunits and promote rapid inactivation of delayed rectifier potassium channels. In vivo, membranes probably contain a mixture of heteromeric potassium channel complexes, making it difficult to assign currents observed in intact tissues to any particular potassium channel family member. Homotetrameric KCNA1 forms a delayed-rectifier potassium channel that opens in response to membrane depolarization, followed by slow spontaneous channel closure. In contrast, a heterotetrameric channel formed by KCNA1 and KCNA4 shows rapid inactivation. Regulates neuronal excitability in hippocampus, especially in mossy fibers and medial perforant path axons, preventing neuronal hyperexcitability. Response to toxins that are selective for KCNA1, respectively for KCNA2, suggests that heteromeric potassium channels composed of both KCNA1 and KCNA2 play a role in pacemaking and regulate the output of deep cerebellar nuclear neurons. May function as down-stream effector for G protein-coupled receptors and inhibit GABAergic inputs to basolateral amygdala neurons. May contribute to the regulation of neurotransmitter release, such as gamma-aminobutyric acid (GABA) release. Plays a role in regulating the generation of action potentials and preventing hyperexcitability in myelinated axons of the vagus nerve, and thereby contributes to the regulation of heart contraction. Required for normal neuromuscular responses. Regulates the frequency of neuronal action potential firing in response to mechanical stimuli, and plays a role in the perception of pain caused by mechanical stimuli, but does not play a role in the perception of pain due to heat stimuli. Required for normal responses to auditory stimuli and precise location of sound sources, but not for sound perception. The use of toxins that block specific channels suggest that it contributes to the regulation of the axonal release of the neurotransmitter dopamine. Required for normal postnatal brain development and normal proliferation of neuronal precursor cells in the brain. Plays a role in the reabsorption of Mg(2+) in the distal convoluted tubules in the kidney and in magnesium ion homeostasis, probably via its effect on the membrane potential. The chain is Potassium voltage-gated channel subfamily A member 1 from Rattus norvegicus (Rat).